The primary structure comprises 200 residues: AFSPRYIELAVVADNGMFTKYNSNLNTIRTRVHEMVNTVNGFYSSVNANASLANLQVWSIKDLIKVEKDSNKTLTSFGEWRERDLLPRISHDHAQLLTTIVFDNYVIGRSRSGKMCDPEQSVGVVRDHSKNNLWVAVTMAHELGHNLDMHHDDTCSCGAKSCIMASVLSKTKSYAFSTCSQNEYQTFLTKHNPQCILNEP.

One can recognise a Peptidase M12B domain in the interval 5–200; it reads RYIELAVVAD…HNPQCILNEP (196 aa). Residues Glu-8 and Asp-92 each contribute to the Ca(2+) site. 3 disulfides stabilise this stretch: Cys-116–Cys-195, Cys-155–Cys-179, and Cys-157–Cys-162. His-141 serves as a coordination point for Zn(2+). The active site involves Glu-142. Zn(2+) contacts are provided by His-145 and His-151. 2 residues coordinate Ca(2+): Cys-195 and Asn-198.

Belongs to the venom metalloproteinase (M12B) family. P-I subfamily. In terms of assembly, monomer. It depends on Zn(2+) as a cofactor. In terms of tissue distribution, expressed by the venom gland.

Its subcellular location is the secreted. Its function is as follows. Zinc metalloprotease that displays fibrinogenolytic, gelatinase and weak hemorrhagic activities. Degrades the three chain of fibrinogen Aalpha-chain (FGA), Bbeta-chain (FGB), and gamma (FGG). This chain is Snake venom metalloproteinase BmooMP-I, found in Bothrops moojeni (Lance-headed viper).